The chain runs to 322 residues: uncharacterized protein (322 aa).

This sequence belongs to the glycosyltransferase 2 family.

This is an uncharacterized protein from Nostoc sp. (strain PCC 7120 / SAG 25.82 / UTEX 2576).